A 366-amino-acid chain; its full sequence is Chorismate synthase (366 aa).

Position 48 (arginine 48) interacts with NADP(+). FMN is bound by residues 125 to 127 (RSS), 241 to 242 (NA), glycine 285, 300 to 304 (KPTSS), and arginine 326.

Belongs to the chorismate synthase family. As to quaternary structure, homotetramer. FMNH2 serves as cofactor.

It carries out the reaction 5-O-(1-carboxyvinyl)-3-phosphoshikimate = chorismate + phosphate. It functions in the pathway metabolic intermediate biosynthesis; chorismate biosynthesis; chorismate from D-erythrose 4-phosphate and phosphoenolpyruvate: step 7/7. Functionally, catalyzes the anti-1,4-elimination of the C-3 phosphate and the C-6 proR hydrogen from 5-enolpyruvylshikimate-3-phosphate (EPSP) to yield chorismate, which is the branch point compound that serves as the starting substrate for the three terminal pathways of aromatic amino acid biosynthesis. This reaction introduces a second double bond into the aromatic ring system. This chain is Chorismate synthase, found in Roseobacter denitrificans (strain ATCC 33942 / OCh 114) (Erythrobacter sp. (strain OCh 114)).